A 352-amino-acid polypeptide reads, in one-letter code: UDP-N-acetylglucosamine--N-acetylmuramyl-(pentapeptide) pyrophosphoryl-undecaprenol N-acetylglucosamine transferase (352 aa).

Positions 195 and 287 each coordinate UDP-N-acetyl-alpha-D-glucosamine.

Belongs to the glycosyltransferase 28 family. MurG subfamily.

Its subcellular location is the cell membrane. It carries out the reaction Mur2Ac(oyl-L-Ala-gamma-D-Glu-L-Lys-D-Ala-D-Ala)-di-trans,octa-cis-undecaprenyl diphosphate + UDP-N-acetyl-alpha-D-glucosamine = beta-D-GlcNAc-(1-&gt;4)-Mur2Ac(oyl-L-Ala-gamma-D-Glu-L-Lys-D-Ala-D-Ala)-di-trans,octa-cis-undecaprenyl diphosphate + UDP + H(+). The protein operates within cell wall biogenesis; peptidoglycan biosynthesis. Cell wall formation. Catalyzes the transfer of a GlcNAc subunit on undecaprenyl-pyrophosphoryl-MurNAc-pentapeptide (lipid intermediate I) to form undecaprenyl-pyrophosphoryl-MurNAc-(pentapeptide)GlcNAc (lipid intermediate II). The chain is UDP-N-acetylglucosamine--N-acetylmuramyl-(pentapeptide) pyrophosphoryl-undecaprenol N-acetylglucosamine transferase from Streptococcus pneumoniae serotype 19F (strain G54).